Reading from the N-terminus, the 245-residue chain is Leucyl/phenylalanyl-tRNA--protein transferase (245 aa).

The protein belongs to the L/F-transferase family.

Its subcellular location is the cytoplasm. The catalysed reaction is N-terminal L-lysyl-[protein] + L-leucyl-tRNA(Leu) = N-terminal L-leucyl-L-lysyl-[protein] + tRNA(Leu) + H(+). The enzyme catalyses N-terminal L-arginyl-[protein] + L-leucyl-tRNA(Leu) = N-terminal L-leucyl-L-arginyl-[protein] + tRNA(Leu) + H(+). It carries out the reaction L-phenylalanyl-tRNA(Phe) + an N-terminal L-alpha-aminoacyl-[protein] = an N-terminal L-phenylalanyl-L-alpha-aminoacyl-[protein] + tRNA(Phe). Its function is as follows. Functions in the N-end rule pathway of protein degradation where it conjugates Leu, Phe and, less efficiently, Met from aminoacyl-tRNAs to the N-termini of proteins containing an N-terminal arginine or lysine. This chain is Leucyl/phenylalanyl-tRNA--protein transferase, found in Paraburkholderia phymatum (strain DSM 17167 / CIP 108236 / LMG 21445 / STM815) (Burkholderia phymatum).